The primary structure comprises 461 residues: Photosystem II CP43 reaction center protein (461 aa).

Residues 1-2 (ME) constitute a propeptide that is removed on maturation. Thr3 bears the N-acetylthreonine mark. Position 3 is a phosphothreonine (Thr3). Helical transmembrane passes span 57–81 (LFEV…PHIA), 122–143 (LIGP…KDKN), 166–188 (KAMY…RIIT), 243–263 (TPWP…LSYS), and 279–300 (WFNN…ASQA). Glu355 is a binding site for [CaMn4O5] cluster. The chain crosses the membrane as a helical span at residues 435–459 (RARAAAAGFEKGIDRVDEPVLSMRP).

It belongs to the PsbB/PsbC family. PsbC subfamily. PSII is composed of 1 copy each of membrane proteins PsbA, PsbB, PsbC, PsbD, PsbE, PsbF, PsbH, PsbI, PsbJ, PsbK, PsbL, PsbM, PsbT, PsbX, PsbY, PsbZ, Psb30/Ycf12, at least 3 peripheral proteins of the oxygen-evolving complex and a large number of cofactors. It forms dimeric complexes. Binds multiple chlorophylls and provides some of the ligands for the Ca-4Mn-5O cluster of the oxygen-evolving complex. It may also provide a ligand for a Cl- that is required for oxygen evolution. PSII binds additional chlorophylls, carotenoids and specific lipids. serves as cofactor.

The protein resides in the plastid. It is found in the chloroplast thylakoid membrane. In terms of biological role, one of the components of the core complex of photosystem II (PSII). It binds chlorophyll and helps catalyze the primary light-induced photochemical processes of PSII. PSII is a light-driven water:plastoquinone oxidoreductase, using light energy to abstract electrons from H(2)O, generating O(2) and a proton gradient subsequently used for ATP formation. This chain is Photosystem II CP43 reaction center protein, found in Chlamydomonas moewusii (Chlamydomonas eugametos).